A 465-amino-acid polypeptide reads, in one-letter code: Phosphomethylpyrimidine synthase (465 aa).

Substrate is bound by residues N80, M109, Y139, H175, 195–197, 236–239, and E275; these read SRG and DSLR. Residue H279 coordinates Zn(2+). Residue Y302 coordinates substrate. H343 serves as a coordination point for Zn(2+). Positions 423, 426, and 431 each coordinate [4Fe-4S] cluster.

It belongs to the ThiC family. It depends on [4Fe-4S] cluster as a cofactor.

The catalysed reaction is 5-amino-1-(5-phospho-beta-D-ribosyl)imidazole + S-adenosyl-L-methionine = 4-amino-2-methyl-5-(phosphooxymethyl)pyrimidine + CO + 5'-deoxyadenosine + formate + L-methionine + 3 H(+). It participates in cofactor biosynthesis; thiamine diphosphate biosynthesis. In terms of biological role, catalyzes the synthesis of the hydroxymethylpyrimidine phosphate (HMP-P) moiety of thiamine from aminoimidazole ribotide (AIR) in a radical S-adenosyl-L-methionine (SAM)-dependent reaction. The sequence is that of Phosphomethylpyrimidine synthase from Synechococcus sp. (strain CC9311).